We begin with the raw amino-acid sequence, 294 residues long: Protein C3orf33 homolog (294 aa).

Ala2 is modified (N-acetylalanine). A helical membrane pass occupies residues 36 to 53 (LVQNISTGMAIAGIMLLI). Residues 244–271 (KPAGADLGSTKDSYHDSRRRASGKGKDS) form a disordered region.

The protein localises to the membrane. Its function is as follows. May play a role in transcription regulation. The protein is Protein C3orf33 homolog of Mus musculus (Mouse).